The sequence spans 235 residues: MAGYKRILLKLSGEALAGAATFGIDADRVRSLGREVADVAASGIQVGVVVGGGNIFRGVAAAARSMDRVTGDHMGMLATVINSLALSDALEQMGIPTRVMSAIEMHQVAEPYIRRRAIRHLEKGRIVIFAAGTSNPYFSTDTAATLRALEIKADVIAKATRVDGVYDKDPLKHPDAVKFPEISYLEVLSRGLGVMDATSIAMCRDNKLPIIVFNLNTIGNIMRMSMGETIGTVIH.

10–13 is a binding site for ATP; that stretch reads KLSG. Position 52 (Gly-52) interacts with UMP. 2 residues coordinate ATP: Gly-53 and Arg-57. Residues Asp-72 and 133–140 each bind UMP; that span reads TSNPYFST. Residues Thr-160, Tyr-166, and Asp-169 each contribute to the ATP site.

Belongs to the UMP kinase family. Homohexamer.

The protein localises to the cytoplasm. The enzyme catalyses UMP + ATP = UDP + ADP. It functions in the pathway pyrimidine metabolism; CTP biosynthesis via de novo pathway; UDP from UMP (UMPK route): step 1/1. Inhibited by UTP. Catalyzes the reversible phosphorylation of UMP to UDP. The chain is Uridylate kinase from Solibacter usitatus (strain Ellin6076).